The sequence spans 152 residues: MFRGVTSISIDNKGRIAIPTRYRAELREQHEGVLVCTVDIRQPCLLLYPLHEWETVEQKLLALSNFEPMQRRIQRVMQGFATECEMDAAGRILLSPTLRQHAQLEQQIMLVGQLNKFEIWQDKQWQSQIAEDLALGGSAEMLNCEALKNLSL.

SpoVT-AbrB domains follow at residues 5–52 (VTSI…PLHE) and 81–124 (ATEC…QDKQ).

This sequence belongs to the MraZ family. In terms of assembly, forms oligomers.

It localises to the cytoplasm. Its subcellular location is the nucleoid. This Actinobacillus pleuropneumoniae serotype 5b (strain L20) protein is Transcriptional regulator MraZ.